Consider the following 471-residue polypeptide: Serine/threonine-protein kinase AtPK2/AtPK19 (471 aa).

Residues 1–21 (MVSSQCSVANKNQTGKPFQKH) are disordered. The region spanning 140–395 (FEVLKVVGQG…AEEIKKHKWF (256 aa)) is the Protein kinase domain. ATP contacts are provided by residues 146 to 154 (VGQGAFGKV) and K169. The Proton acceptor role is filled by D263. The interval 281–307 (DFGLAKEFEENTRSNSMCGTTEYMAPE) is activation loop. S296 carries the post-translational modification Phosphoserine; by PDPK1. Residues 396 to 466 (KAINWKKLEA…VRPPHSFLHR (71 aa)) form the AGC-kinase C-terminal domain. Phosphothreonine; by TOR is present on T455.

It belongs to the protein kinase superfamily. AGC Ser/Thr protein kinase family. S6 kinase subfamily. In terms of assembly, interacts with TAP46. Binds to MRF1. Undergoes serine-specific autophosphorylation. Phosphorylated at Thr-455 by TOR.

The catalysed reaction is L-seryl-[protein] + ATP = O-phospho-L-seryl-[protein] + ADP + H(+). It catalyses the reaction L-threonyl-[protein] + ATP = O-phospho-L-threonyl-[protein] + ADP + H(+). With respect to regulation, activated by PDK1. Downstream effector of TOR signaling pathway. May be involved in adaptation of plant to cold or high-salt conditions. Mediates the phosphorylation of MRFs (e.g. MRF1). The chain is Serine/threonine-protein kinase AtPK2/AtPK19 (ATPK2) from Arabidopsis thaliana (Mouse-ear cress).